Here is a 121-residue protein sequence, read N- to C-terminus: uncharacterized protein (121 aa).

Residues isoleucine 7–glycine 121 form the HIT domain. Residues histidine 105–histidine 109 carry the Histidine triad motif motif.

This is an uncharacterized protein from Aquifex aeolicus (strain VF5).